The sequence spans 539 residues: Phosphoenolpyruvate carboxykinase (ATP) (539 aa).

Substrate contacts are provided by Arg64, Tyr206, and Lys212. ATP is bound by residues Lys212, His231, and 247 to 255; that span reads GLSGTGKTT. Mn(2+) is bound by residues Lys212 and His231. Asp268 is a Mn(2+) binding site. Residues Glu296, Arg332, 448-449, and Thr454 contribute to the ATP site; that span reads RI. Substrate is bound at residue Arg332.

Belongs to the phosphoenolpyruvate carboxykinase (ATP) family. In terms of assembly, monomer. The cofactor is Mn(2+).

The protein resides in the cytoplasm. It carries out the reaction oxaloacetate + ATP = phosphoenolpyruvate + ADP + CO2. It functions in the pathway carbohydrate biosynthesis; gluconeogenesis. In terms of biological role, involved in the gluconeogenesis. Catalyzes the conversion of oxaloacetate (OAA) to phosphoenolpyruvate (PEP) through direct phosphoryl transfer between the nucleoside triphosphate and OAA. The sequence is that of Phosphoenolpyruvate carboxykinase (ATP) from Salmonella arizonae (strain ATCC BAA-731 / CDC346-86 / RSK2980).